The following is a 175-amino-acid chain: Large ribosomal subunit protein uL10 (175 aa).

The protein belongs to the universal ribosomal protein uL10 family. In terms of assembly, part of the ribosomal stalk of the 50S ribosomal subunit. The N-terminus interacts with L11 and the large rRNA to form the base of the stalk. The C-terminus forms an elongated spine to which L12 dimers bind in a sequential fashion forming a multimeric L10(L12)X complex.

Functionally, forms part of the ribosomal stalk, playing a central role in the interaction of the ribosome with GTP-bound translation factors. The sequence is that of Large ribosomal subunit protein uL10 from Cupriavidus taiwanensis (strain DSM 17343 / BCRC 17206 / CCUG 44338 / CIP 107171 / LMG 19424 / R1) (Ralstonia taiwanensis (strain LMG 19424)).